A 737-amino-acid chain; its full sequence is MAVSSALCIFSLLVLAQAQSELQQPKIELRLAGDKRKHYEGRLEVFYNNEWGTVCDDDFSIEAAHVACRQLGFLGAVAWSPSAKFGQGEGRIWLDNVHCTGRENSLAACPSNGFGVSDCRHSEDVGVICNQKRIPGHRFINIMNNNVETLEERVEEIRIRPISSHLKRIPITEGYVEVKERGKWRQICDEEWTPLNSRVACGMYGFPGEKNYNNKVYRSLSMRKKKNYWGFSVNCTGNEAHVSSCRLGKALEPKRNGTCGRGLPVVVSCVPGRAFAPSSSIGFRKAYRPEQPLVRLRGGANVGEGRVEVLKNGVWGTVCDDNWNLKAATVVCRELGFGSAKEALTGAKLGQGMGPVHMNEVECSGFEKSLTDCYFNNDALGCSHEEDAAVRCNVPAMGFQKRIRLSGGRNPFEGRVEVLAEKNGSLVWGTVCSENWGIIEAMVVCRQLGLGFASHAFQETWYWAGDANADNVVMSGVRCSGTEMSLPQCLHHGKHINCPKGGGRFAAGVSCSDTAPDLVLNAQLVEQTTYLEDRPMYALQCALEENCLSSTARKNDHSSYRRLLRFSSQIHNVGQSDFRPKLGYHAWTWHECHRHYHSMEVFTHYDLLSLNGTKVAEGHKASFCLEDTHCDEGISKRYHCANFGEQGITVGCWDTYRHDIDCQWIDVTDVKPGDYIFQVVINPNYDVAESDYTNNVMKCKCRYDGYRIWTYSCHIGGSRSSDMDEYSGMSNQLNHLR.

Positions 1–18 (MAVSSALCIFSLLVLAQA) are cleaved as a signal peptide. SRCR domains lie at 29 to 130 (LRLA…VICN), 159 to 270 (IRPI…VSCV), 294 to 393 (VRLR…VRCN), and 403 to 512 (IRLS…VSCS). 9 cysteine pairs are disulfide-bonded: cysteine 55-cysteine 119, cysteine 68-cysteine 129, cysteine 99-cysteine 109, cysteine 188-cysteine 259, cysteine 201-cysteine 269, cysteine 235-cysteine 245, cysteine 319-cysteine 382, cysteine 332-cysteine 392, and cysteine 363-cysteine 373. Asparagine 256 carries an N-linked (GlcNAc...) asparagine glycan. An N-linked (GlcNAc...) asparagine glycan is attached at asparagine 423. 3 disulfide bridges follow: cysteine 432–cysteine 498, cysteine 445–cysteine 511, and cysteine 479–cysteine 489. Residues 516–718 (PDLVLNAQLV…WTYSCHIGGS (203 aa)) form a lysyl-oxidase like region. Ca(2+) contacts are provided by aspartate 517 and leucine 518. Disulfide bonds link cysteine 541–cysteine 592, cysteine 547–cysteine 662, cysteine 624–cysteine 640, and cysteine 630–cysteine 652. Positions 593, 595, and 597 each coordinate Cu cation. N-linked (GlcNAc...) asparagine glycosylation occurs at asparagine 611. The segment at residues 620–656 (KASFCLEDTHCDEGISKRYHCANFGEQGITVGCWDTY) is a cross-link (lysine tyrosylquinone (Lys-Tyr)). At tyrosine 656 the chain carries 2',4',5'-topaquinone. Residues glutamate 689, aspartate 691, asparagine 694, and asparagine 695 each coordinate Ca(2+). Cysteine 699 and cysteine 713 form a disulfide bridge.

The protein belongs to the lysyl oxidase family. Requires Cu cation as cofactor. Lysine tyrosylquinone residue is required as a cofactor. The lysine tyrosylquinone cross-link (LTQ) is generated by condensation of the epsilon-amino group of a lysine with a topaquinone produced by oxidation of tyrosine.

The protein resides in the secreted. Its subcellular location is the extracellular space. The protein localises to the extracellular matrix. It is found in the basement membrane. It localises to the nucleus. The protein resides in the chromosome. Its subcellular location is the endoplasmic reticulum. It carries out the reaction L-lysyl-[protein] + O2 + H2O = (S)-2-amino-6-oxohexanoyl-[protein] + H2O2 + NH4(+). In terms of biological role, mediates the post-translational oxidative deamination of lysine residues on target proteins leading to the formation of deaminated lysine (allysine). Acts as a transcription corepressor and specifically mediates deamination of trimethylated 'Lys-4' of histone H3 (H3K4me3), a specific tag for epigenetic transcriptional activation. Shows no activity against histone H3 when it is trimethylated on 'Lys-9' (H3K9me3) or 'Lys-27' (H3K27me3) or when 'Lys-4' is monomethylated (H3K4me1) or dimethylated (H3K4me2). Also mediates deamination of methylated TAF10, a member of the transcription factor IID (TFIID) complex, which induces release of TAF10 from promoters, leading to inhibition of TFIID-dependent transcription. LOXL2-mediated deamination of TAF10 results in transcriptional repression of genes required for embryonic stem cell pluripotency. Involved in epithelial to mesenchymal transition (EMT) and participates in repression of E-cadherin, probably by mediating deamination of histone H3. When secreted into the extracellular matrix, promotes cross-linking of extracellular matrix proteins by mediating oxidative deamination of peptidyl lysine residues in precursors to fibrous collagen and elastin. Acts as a regulator of sprouting angiogenesis, probably via collagen IV scaffolding. Acts as a regulator of chondrocyte differentiation, probably by regulating expression of factors that control chondrocyte differentiation. Required with loxl2b for correct expression of Sox2 and for neural differentiation. This chain is Lysyl oxidase homolog 2A (loxl2a), found in Danio rerio (Zebrafish).